The following is a 400-amino-acid chain: NADH-ubiquinone oxidoreductase 49 kDa subunit (400 aa).

This sequence belongs to the complex I 49 kDa subunit family.

The protein resides in the mitochondrion. The enzyme catalyses a ubiquinone + NADH + 5 H(+)(in) = a ubiquinol + NAD(+) + 4 H(+)(out). Core subunit of the mitochondrial membrane respiratory chain NADH dehydrogenase (Complex I) that is believed to belong to the minimal assembly required for catalysis. Complex I functions in the transfer of electrons from NADH to the respiratory chain. The immediate electron acceptor for the enzyme is believed to be ubiquinone. Component of the iron-sulfur (IP) fragment of the enzyme. Component of the iron-sulfur (IP) fragment of the enzyme. This Prototheca wickerhamii protein is NADH-ubiquinone oxidoreductase 49 kDa subunit (NAD7).